Consider the following 355-residue polypeptide: MIETDKLTGADRLPDRVISATPASTQEEAFERALRPKLLDEYVGQEKVRGQLDIFMHAARKRREALDHVLLFGPPGLGKTTLAHIIAREMGVNLRQTSGPVLERPGDLAALLTNLEAHDVLFIDEIHRLSPVVEEILYPALEDYQIDIMIGEGPAARSVKLDLQPFTLVGATTRAGMLTNPLRDRFGIVARLEFYTPDELARIVARSALLLNAAIDPAGALEIARRARGTPRIANRLLRRVRDFAEVKSDGTITRELADAALEMLDVDSVGFDLMDRKLLEAVLHKFDGGPVGVDNLAAAIGEARDTIEDVLEPYMIQQGYLQRTPRGRMATAAAYRHFGLASPRDGGADLAEGL.

Residues 4-195 are large ATPase domain (RuvB-L); that stretch reads TDKLTGADRL…FGIVARLEFY (192 aa). Residues leucine 34, arginine 35, glycine 76, lysine 79, threonine 80, threonine 81, 142-144, arginine 185, tyrosine 195, and arginine 232 contribute to the ATP site; that span reads EDY. Threonine 80 lines the Mg(2+) pocket. The segment at 196-266 is small ATPAse domain (RuvB-S); sequence TPDELARIVA…LADAALEMLD (71 aa). A head domain (RuvB-H) region spans residues 269-355; it reads SVGFDLMDRK…DGGADLAEGL (87 aa). The DNA site is built by arginine 305, arginine 324, and arginine 329.

It belongs to the RuvB family. In terms of assembly, homohexamer. Forms an RuvA(8)-RuvB(12)-Holliday junction (HJ) complex. HJ DNA is sandwiched between 2 RuvA tetramers; dsDNA enters through RuvA and exits via RuvB. An RuvB hexamer assembles on each DNA strand where it exits the tetramer. Each RuvB hexamer is contacted by two RuvA subunits (via domain III) on 2 adjacent RuvB subunits; this complex drives branch migration. In the full resolvosome a probable DNA-RuvA(4)-RuvB(12)-RuvC(2) complex forms which resolves the HJ.

It is found in the cytoplasm. The enzyme catalyses ATP + H2O = ADP + phosphate + H(+). Functionally, the RuvA-RuvB-RuvC complex processes Holliday junction (HJ) DNA during genetic recombination and DNA repair, while the RuvA-RuvB complex plays an important role in the rescue of blocked DNA replication forks via replication fork reversal (RFR). RuvA specifically binds to HJ cruciform DNA, conferring on it an open structure. The RuvB hexamer acts as an ATP-dependent pump, pulling dsDNA into and through the RuvAB complex. RuvB forms 2 homohexamers on either side of HJ DNA bound by 1 or 2 RuvA tetramers; 4 subunits per hexamer contact DNA at a time. Coordinated motions by a converter formed by DNA-disengaged RuvB subunits stimulates ATP hydrolysis and nucleotide exchange. Immobilization of the converter enables RuvB to convert the ATP-contained energy into a lever motion, pulling 2 nucleotides of DNA out of the RuvA tetramer per ATP hydrolyzed, thus driving DNA branch migration. The RuvB motors rotate together with the DNA substrate, which together with the progressing nucleotide cycle form the mechanistic basis for DNA recombination by continuous HJ branch migration. Branch migration allows RuvC to scan DNA until it finds its consensus sequence, where it cleaves and resolves cruciform DNA. This Cupriavidus metallidurans (strain ATCC 43123 / DSM 2839 / NBRC 102507 / CH34) (Ralstonia metallidurans) protein is Holliday junction branch migration complex subunit RuvB.